The following is a 187-amino-acid chain: GTP cyclohydrolase 1 (187 aa).

Zn(2+) contacts are provided by C76, H79, and C148.

The protein belongs to the GTP cyclohydrolase I family. Toroid-shaped homodecamer, composed of two pentamers of five dimers.

The catalysed reaction is GTP + H2O = 7,8-dihydroneopterin 3'-triphosphate + formate + H(+). It participates in cofactor biosynthesis; 7,8-dihydroneopterin triphosphate biosynthesis; 7,8-dihydroneopterin triphosphate from GTP: step 1/1. In Streptococcus suis (strain 98HAH33), this protein is GTP cyclohydrolase 1.